A 271-amino-acid chain; its full sequence is Glutamate racemase (271 aa).

Residues Asp10–Ser11 and Tyr42–Gly43 contribute to the substrate site. Residue Cys73 is the Proton donor/acceptor of the active site. A substrate-binding site is contributed by Asn74 to Thr75. Cys183 functions as the Proton donor/acceptor in the catalytic mechanism. Thr184–His185 lines the substrate pocket.

Belongs to the aspartate/glutamate racemases family.

It catalyses the reaction L-glutamate = D-glutamate. It functions in the pathway cell wall biogenesis; peptidoglycan biosynthesis. Provides the (R)-glutamate required for cell wall biosynthesis. The polypeptide is Glutamate racemase (Lactococcus lactis subsp. lactis (strain IL1403) (Streptococcus lactis)).